The chain runs to 191 residues: Prostaglandin-H2 D-isomerase (191 aa).

A signal peptide spans 1–24 (MAALHTLWMGLVLLGVLGVLQTQA). The residue at position 25 (Q25) is a Pyrrolidone carboxylic acid. N-linked (GlcNAc...) asparagine glycosylation occurs at N51. C65 serves as the catalytic Nucleophile. A glycan (N-linked (GlcNAc...) asparagine) is linked at N78. The cysteines at positions 89 and 186 are disulfide-linked.

Belongs to the calycin superfamily. Lipocalin family. In terms of assembly, monomer.

It is found in the rough endoplasmic reticulum. The protein resides in the nucleus membrane. It localises to the golgi apparatus. Its subcellular location is the cytoplasm. The protein localises to the perinuclear region. It is found in the secreted. The catalysed reaction is prostaglandin H2 = prostaglandin D2. In terms of biological role, catalyzes the conversion of PGH2 to PGD2, a prostaglandin involved in smooth muscle contraction/relaxation and a potent inhibitor of platelet aggregation. Involved in a variety of CNS functions, such as sedation, NREM sleep and PGE2-induced allodynia, and may have an anti-apoptotic role in oligodendrocytes. Binds small non-substrate lipophilic molecules, including biliverdin, bilirubin, retinal, retinoic acid and thyroid hormone, and may act as a scavenger for harmful hydrophobic molecules and as a secretory retinoid and thyroid hormone transporter. Possibly involved in development and maintenance of the blood-brain, blood-retina, blood-aqueous humor and blood-testis barrier. It is likely to play important roles in both maturation and maintenance of the central nervous system and male reproductive system. Involved in PLA2G3-dependent maturation of mast cells. PLA2G3 is secreted by immature mast cells and acts on nearby fibroblasts upstream to PTDGS to synthesize PGD2, which in turn promotes mast cell maturation and degranulation via PTGDR. In Ursus arctos (Brown bear), this protein is Prostaglandin-H2 D-isomerase (PTGDS).